The chain runs to 143 residues: Deoxyuridine 5'-triphosphate nucleotidohydrolase (143 aa).

Substrate is bound by residues Arg-62–Gly-64, Asn-75, Thr-79–Asp-81, and Lys-89.

Belongs to the dUTPase family. Mg(2+) serves as cofactor.

The enzyme catalyses dUTP + H2O = dUMP + diphosphate + H(+). The protein operates within pyrimidine metabolism; dUMP biosynthesis; dUMP from dCTP (dUTP route): step 2/2. This enzyme is involved in nucleotide metabolism: it produces dUMP, the immediate precursor of thymidine nucleotides and it decreases the intracellular concentration of dUTP so that uracil cannot be incorporated into DNA. In Clostridium kluyveri (strain ATCC 8527 / DSM 555 / NBRC 12016 / NCIMB 10680 / K1), this protein is Deoxyuridine 5'-triphosphate nucleotidohydrolase.